The sequence spans 60 residues: Large ribosomal subunit protein uL30 (60 aa).

Belongs to the universal ribosomal protein uL30 family. As to quaternary structure, part of the 50S ribosomal subunit.

This chain is Large ribosomal subunit protein uL30, found in Nocardioides sp. (strain ATCC BAA-499 / JS614).